The primary structure comprises 440 residues: APO protein 2, chloroplastic (440 aa).

The N-terminal 62 residues, Met-1–Leu-62, are a transit peptide targeting the chloroplast. Residues Ala-106 to Asp-115 show a composition bias toward basic and acidic residues. The interval Ala-106 to Asn-126 is disordered. 2 APO domains span residues Ala-162–Glu-247 and Val-332–Glu-417.

It belongs to the APO family.

It localises to the plastid. It is found in the chloroplast. Functionally, may be involved in the stable assembly of several 4Fe-4S cluster-containing complexes of chloroplasts. This chain is APO protein 2, chloroplastic (APO2), found in Arabidopsis thaliana (Mouse-ear cress).